The chain runs to 335 residues: Glutamyl-tRNA reductase (335 aa).

Residues 60–63 (TCHR), Ser110, 115–117 (ETE), and Gln121 contribute to the substrate site. Cys61 acts as the Nucleophile in catalysis. 189 to 194 (GYSEIN) lines the NADP(+) pocket.

The protein belongs to the glutamyl-tRNA reductase family. In terms of assembly, homodimer.

It carries out the reaction (S)-4-amino-5-oxopentanoate + tRNA(Glu) + NADP(+) = L-glutamyl-tRNA(Glu) + NADPH + H(+). It functions in the pathway porphyrin-containing compound metabolism; protoporphyrin-IX biosynthesis; 5-aminolevulinate from L-glutamyl-tRNA(Glu): step 1/2. Catalyzes the NADPH-dependent reduction of glutamyl-tRNA(Glu) to glutamate 1-semialdehyde (GSA). The sequence is that of Glutamyl-tRNA reductase from Chlamydia trachomatis serovar D (strain ATCC VR-885 / DSM 19411 / UW-3/Cx).